We begin with the raw amino-acid sequence, 410 residues long: Multifunctional CCA protein (410 aa).

ATP contacts are provided by Gly8 and Arg11. 2 residues coordinate CTP: Gly8 and Arg11. The Mg(2+) site is built by Asp21 and Asp23. Residues Arg91, Arg137, and Arg140 each contribute to the ATP site. CTP is bound by residues Arg91, Arg137, and Arg140. An HD domain is found at 228-329 (TGVHVLSVLQ…LELLQSFDVY (102 aa)).

This sequence belongs to the tRNA nucleotidyltransferase/poly(A) polymerase family. Bacterial CCA-adding enzyme type 1 subfamily. Monomer. Can also form homodimers and oligomers. Mg(2+) is required as a cofactor. Requires Ni(2+) as cofactor.

It carries out the reaction a tRNA precursor + 2 CTP + ATP = a tRNA with a 3' CCA end + 3 diphosphate. The catalysed reaction is a tRNA with a 3' CCA end + 2 CTP + ATP = a tRNA with a 3' CCACCA end + 3 diphosphate. Catalyzes the addition and repair of the essential 3'-terminal CCA sequence in tRNAs without using a nucleic acid template. Adds these three nucleotides in the order of C, C, and A to the tRNA nucleotide-73, using CTP and ATP as substrates and producing inorganic pyrophosphate. tRNA 3'-terminal CCA addition is required both for tRNA processing and repair. Also involved in tRNA surveillance by mediating tandem CCA addition to generate a CCACCA at the 3' terminus of unstable tRNAs. While stable tRNAs receive only 3'-terminal CCA, unstable tRNAs are marked with CCACCA and rapidly degraded. The sequence is that of Multifunctional CCA protein from Pseudomonas aeruginosa (strain ATCC 15692 / DSM 22644 / CIP 104116 / JCM 14847 / LMG 12228 / 1C / PRS 101 / PAO1).